The sequence spans 290 residues: Nucleotide-binding protein BAV3158 (290 aa).

9 to 16 (GISGSGKS) is a binding site for ATP. Residue 58-61 (DVRS) participates in GTP binding.

It belongs to the RapZ-like family.

Functionally, displays ATPase and GTPase activities. This chain is Nucleotide-binding protein BAV3158, found in Bordetella avium (strain 197N).